The sequence spans 509 residues: MTTFNEYPFLAELGIKAENNDGVFNGKWGGAGEIIKCLNPTNNKVIATVRGAAPEEYETCIQAMLAAKVKWALTPAPRRGEIVRLIGQAMREKIEPLSKLISLEMGKIYIEAKGEVQEFIDVCDYATGLSRSINGQVMPSERPNHILMETWNPLGLVGIITAFNFPCAVLGWNAAISMICGNVQLWKGASTTSLITLAVSKIIEKVLVENDVDPAVCCVLIGPGRTVGEQMIQDKRFGLISFTGSTEVGRRISSTVHGYFGKTILELGGNNAIVVAEDADIELVLRAVLFASVGTTGQRCTTCRRLFVHESLYDTILERLTKAYKTIKIGNPLEEGVLVGPLHTQSAVKEFTEGLEEIKKQGGKVVIGGNKLDISGGNFVEPTVVAIEHDAPIVKTELFVPILYIMKFKNLDDAFAWNNEVPQGLSSSLFTNNQKNIFKWLGPTGSDCGIVNVNVATNGAEIGGAFGGEKETGGGRESGSDSWKQYCRRSTNTINYGNTMPLSQGINFN.

Residue 244–249 (GSTEVG) participates in NAD(+) binding. The active-site Proton acceptor is the Glu266. Cys300 functions as the Nucleophile in the catalytic mechanism.

The protein belongs to the aldehyde dehydrogenase family. Homotetramer.

It carries out the reaction an aldehyde + NAD(+) + H2O = a carboxylate + NADH + 2 H(+). This is Putative aldehyde dehydrogenase family 7 member A1 homolog from Dictyostelium discoideum (Social amoeba).